We begin with the raw amino-acid sequence, 216 residues long: UPF0502 protein Spea_2482 (216 aa).

Belongs to the UPF0502 family.

The chain is UPF0502 protein Spea_2482 from Shewanella pealeana (strain ATCC 700345 / ANG-SQ1).